Consider the following 513-residue polypeptide: MSSDPGYQAPVVTVSSSIPRRGVGDSVLIVPVVTRDDAAAVLAAAPFLDKDAVREIEAALKSLGATGGEGQTHRLVVSALPVASVLTIGLGKERDEWPADTVRRVAGNAARSLDKVAAVLTTLSALDLEAAIEGLILGSYRFTEFRSAKTAPKDGGLRAITALSQESKSRARDAAQRATDIATAVATARDFVNTPPSHLYPDEFAKRAKALGEAAGLEVEILDDKALVKAGYGGIVGVGKGSSRPPRLVRLSHKGAVRTRTRGARPGGSKRVALVGKGITFDTGGISIKPAANMHHMTSDMGGAAAVIATVVLAAKQKLPIDVIATVPMAENMPSATAQRPGDVLTQYGGTTVEVLNTDAEGRLILADAIVRACEDNPDYLIETSTLTGAQTVALGSRTPGVMGSDAFRDRVATLSQQVGENAWAMPLPEELKDDLKSTVADLANVSGSRFAGMLVAGTYLREFVADGVEWAHIDVAAPAYNSGGPWGYTPKGGTGVPTRTMFAVLEEIAREG.

Residues K277 and D282 each contribute to the Mn(2+) site. K289 is a catalytic residue. D300, D359, and E361 together coordinate Mn(2+). R363 is an active-site residue.

The protein belongs to the peptidase M17 family. Requires Mn(2+) as cofactor.

Its subcellular location is the cytoplasm. The catalysed reaction is Release of an N-terminal amino acid, Xaa-|-Yaa-, in which Xaa is preferably Leu, but may be other amino acids including Pro although not Arg or Lys, and Yaa may be Pro. Amino acid amides and methyl esters are also readily hydrolyzed, but rates on arylamides are exceedingly low.. It carries out the reaction Release of an N-terminal amino acid, preferentially leucine, but not glutamic or aspartic acids.. Presumably involved in the processing and regular turnover of intracellular proteins. Catalyzes the removal of unsubstituted N-terminal amino acids from various peptides. The protein is Probable cytosol aminopeptidase of Mycobacterium sp. (strain KMS).